A 1072-amino-acid polypeptide reads, in one-letter code: Rho family-interacting cell polarization regulator 2 (1072 aa).

Residues 83–112 (NGLDEYLEVHQTELDKLTAQLKDMRRNSRL) are a coiled coil. The interval 173–470 (RESLTEINRS…ATTATQHRAR (298 aa)) is necessary for interaction with NCAM and myoblast protrusion formation. 2 disordered regions span residues 439–465 (DRVPPANSAEPSSAHVTSSPDIATTAT) and 683–718 (EVEKNSYRTEHPEARGHLQRSLTEDTGVGTSVAGSP). Polar residues predominate over residues 447–460 (AEPSSAHVTSSPDI). Basic and acidic residues predominate over residues 683-698 (EVEKNSYRTEHPEARG).

The protein belongs to the RIPOR family. Homooligomer; homooligomerization is regulated by RHOC and leads to the formation of concatemers through the association of N- and C-termini. Interacts with NCAM; this interaction is necessary for myoblast protrusion formation. Expressed in myoblast and myotubes (at protein level). Expressed in brain, eyes and skeletal muscle.

It is found in the cytoplasm. It localises to the cytoskeleton. Its subcellular location is the cell projection. The protein localises to the filopodium. The protein resides in the apical cell membrane. It is found in the stereocilium. It localises to the stereocilium membrane. Acts as an inhibitor of the small GTPase RHOA and plays several roles in the regulation of myoblast and hair cell differentiation, lymphocyte T proliferation and neutrophil polarization. Plays a role in fetal mononuclear myoblast differentiation by promoting filopodia and myotube formation. Maintains naive T lymphocytes in a quiescent state and prevents chemokine-induced T lymphocyte responses, such as cell adhesion, polarization and migration. Involved also in the regulation of neutrophil polarization, chemotaxis and adhesion. Required for normal development of inner and outer hair cell stereocilia within the cochlea of the inner ear. Plays a role for maintaining the structural organization of the basal domain of stereocilia. Involved in mechanosensory hair cell function. Required for normal hearing. The polypeptide is Rho family-interacting cell polarization regulator 2 (Coturnix japonica (Japanese quail)).